A 48-amino-acid chain; its full sequence is uncharacterized protein (48 aa).

A helical transmembrane segment spans residues 21–43 (SIFVSLGVFAVSVAILKSRLGNF).

It localises to the membrane. This is an uncharacterized protein from Schizosaccharomyces pombe (strain 972 / ATCC 24843) (Fission yeast).